Reading from the N-terminus, the 508-residue chain is Protein ultraspiracle (508 aa).

Residues 1-103 (MDNCDQDASF…NHPLSGSKHL (103 aa)) are modulating. 2 disordered regions span residues 21–40 (PDIS…KAES) and 55–92 (PGSN…QQYP). Positions 24–35 (SQLNDSNNSSFS) are enriched in polar residues. S35 is modified (phosphoserine). A compositionally biased stretch (low complexity) spans 57 to 90 (SNSASSNNNSAGDAQMAQAPNSAGGSAAAAVQQQ). NR C4-type zinc fingers lie at residues 104-124 (CSIC…CEGC) and 140-164 (CREN…YQKC). The segment at residues 104–169 (CSICGDRASG…RYQKCLTCGM (66 aa)) is a DNA-binding region (nuclear receptor). Residues 170 to 223 (KREAVQEERQRGARNAAGRLSASGGGSSGPGSVGGSSSQGGGGGGGVSGGMGSG) form a hinge region. The tract at residues 178 to 228 (RQRGARNAAGRLSASGGGSSGPGSVGGSSSQGGGGGGGVSGGMGSGNGSDD) is disordered. Residues 192 to 224 (SGGGSSGPGSVGGSSSQGGGGGGGVSGGMGSGN) show a composition bias toward gly residues. Residues 239-498 (SIERIIEAEQ…ELFLEQLEAP (260 aa)) form the NR LBD domain.

This sequence belongs to the nuclear hormone receptor family. NR2 subfamily. As to quaternary structure, heterodimer of USP and ECR. Only the heterodimer is capable of high-affinity binding to ecdysone.

The protein localises to the nucleus. In terms of biological role, receptor for ecdysone. May be an important modulator of insect metamorphosis. Plays an important part in embryonic and post-embryonic development. Binds to ecdysone response elements (ECRES) such as in the promoter region of s15 chorion gene. The sequence is that of Protein ultraspiracle (usp) from Drosophila melanogaster (Fruit fly).